A 325-amino-acid polypeptide reads, in one-letter code: Acetyl-coenzyme A carboxylase carboxyl transferase subunit alpha (325 aa).

In terms of domain architecture, CoA carboxyltransferase C-terminal spans 44-298 (QLEGRAEQLR…KTAILSNLEE (255 aa)).

Belongs to the AccA family. As to quaternary structure, acetyl-CoA carboxylase is a heterohexamer composed of biotin carboxyl carrier protein (AccB), biotin carboxylase (AccC) and two subunits each of ACCase subunit alpha (AccA) and ACCase subunit beta (AccD).

It localises to the cytoplasm. The catalysed reaction is N(6)-carboxybiotinyl-L-lysyl-[protein] + acetyl-CoA = N(6)-biotinyl-L-lysyl-[protein] + malonyl-CoA. The protein operates within lipid metabolism; malonyl-CoA biosynthesis; malonyl-CoA from acetyl-CoA: step 1/1. Functionally, component of the acetyl coenzyme A carboxylase (ACC) complex. First, biotin carboxylase catalyzes the carboxylation of biotin on its carrier protein (BCCP) and then the CO(2) group is transferred by the carboxyltransferase to acetyl-CoA to form malonyl-CoA. This is Acetyl-coenzyme A carboxylase carboxyl transferase subunit alpha from Acaryochloris marina (strain MBIC 11017).